The chain runs to 145 residues: Chaperonin GroEL (145 aa).

The protein belongs to the chaperonin (HSP60) family. Forms a cylinder of 14 subunits composed of two heptameric rings stacked back-to-back. Interacts with the co-chaperonin GroES.

It is found in the cytoplasm. The enzyme catalyses ATP + H2O + a folded polypeptide = ADP + phosphate + an unfolded polypeptide.. Together with its co-chaperonin GroES, plays an essential role in assisting protein folding. The GroEL-GroES system forms a nano-cage that allows encapsulation of the non-native substrate proteins and provides a physical environment optimized to promote and accelerate protein folding. The sequence is that of Chaperonin GroEL from Thermus thermophilus.